A 523-amino-acid polypeptide reads, in one-letter code: Spastin (523 aa).

The Cytoplasmic segment spans residues 1–41 (MLDKLSKHKTMFYERVKEIDQILFSQQQAKQTQLDNLSNNN). Positions 42-58 (ASGGFFSGFMKMFSPLS) form an intramembrane region, helical. 3 stretches are compositionally biased toward low complexity: residues 57–71 (LSTP…NSNT), 171–184 (QQPP…QQQP), and 193–210 (TALR…TANN). Disordered regions lie at residues 57–77 (LSTP…AISQ) and 129–218 (GISS…LDQI). Over 59–523 (TPPNSSSNNN…ESYGTFAKGI (465 aa)) the chain is Cytoplasmic.

This sequence belongs to the AAA ATPase family. Spastin subfamily. Homohexamer. The homohexamer is stabilized by ATP-binding. The homohexamer may adopt a ring conformation through which microtubules pass prior to being severed.

It localises to the membrane. The catalysed reaction is n ATP + n H2O + a microtubule = n ADP + n phosphate + (n+1) alpha/beta tubulin heterodimers.. ATP-dependent microtubule severing protein. Stimulates microtubule minus-end depolymerization and poleward microtubule flux in the mitotic spindle. The sequence is that of Spastin from Naegleria gruberi (Amoeba).